The primary structure comprises 133 residues: NADH dehydrogenase [ubiquinone] 1 alpha subcomplex subunit 6 (133 aa).

It belongs to the complex I LYR family. Complex I is composed of at least 49 different subunits.

It localises to the mitochondrion inner membrane. Accessory subunit of the mitochondrial membrane respiratory chain NADH dehydrogenase (Complex I), that is believed to be not involved in catalysis. Complex I functions in the transfer of electrons from NADH to the respiratory chain. The immediate electron acceptor for the enzyme is believed to be ubiquinone. The protein is NADH dehydrogenase [ubiquinone] 1 alpha subcomplex subunit 6 of Arabidopsis thaliana (Mouse-ear cress).